The sequence spans 36 residues: GPSQPTYPGNDAPVEDLRFYYDNLQQYRLNVFRHRY.

Tyrosine amide is present on Tyr-36.

This sequence belongs to the NPY family.

It localises to the secreted. Functionally, hormone secreted by pancreatic cells that acts as a regulator of pancreatic and gastrointestinal functions. In Anser anser anser (Western greylag goose), this protein is Pancreatic polypeptide (PPY).